The primary structure comprises 122 residues: MIQPQSYLTAADNSGARKLMCIRVLGGGNRRYARIGDVIVAVVKDGIPNIPIKKSDTVKAVIVRTRKELKRDNGMNICFDDNAAVIINADGNPRGTRVFGPVARELRDKNFTKIISLAPEVL.

The protein belongs to the universal ribosomal protein uL14 family. In terms of assembly, part of the 50S ribosomal subunit.

Its subcellular location is the plastid. The protein localises to the cyanelle. Binds to 23S rRNA. This Cyanophora paradoxa protein is Large ribosomal subunit protein uL14c.